The sequence spans 501 residues: GMP synthase [glutamine-hydrolyzing] (501 aa).

In terms of domain architecture, Glutamine amidotransferase type-1 spans 1–185 (MVLVVDYGSQ…LFNVCKLEKN (185 aa)). Cysteine 75 (nucleophile) is an active-site residue. Catalysis depends on residues histidine 159 and glutamate 161. A GMPS ATP-PPase domain is found at 186–376 (WKIGDLVEEK…LGIPDRIINR (191 aa)). 213-219 (SGGVDSS) is an ATP binding site.

Homodimer.

The catalysed reaction is XMP + L-glutamine + ATP + H2O = GMP + L-glutamate + AMP + diphosphate + 2 H(+). The protein operates within purine metabolism; GMP biosynthesis; GMP from XMP (L-Gln route): step 1/1. In terms of biological role, catalyzes the synthesis of GMP from XMP. In Thermotoga petrophila (strain ATCC BAA-488 / DSM 13995 / JCM 10881 / RKU-1), this protein is GMP synthase [glutamine-hydrolyzing].